The chain runs to 298 residues: Mitochondrial dicarboxylate transporter (298 aa).

Solcar repeat units follow at residues 11–95, 103–195, and 205–289; these read KNIK…LKEN, TNMA…FKNY, and SKNY…LKKH. The next 6 helical transmembrane spans lie at 17–37, 58–76, 105–126, 170–189, 211–231, and 265–283; these read WWYGGAAGIFATMVTHPLDLA, ILANEGVVGLYSGLSAAVL, MAYLLPCSMFSGAIGGLAGNFA, GWKPNMVRGILMTASQVVTY, LTASLLAGLVATTVCSPADVM, and WLPSFTRLGPFTMLIFFAI.

This sequence belongs to the mitochondrial carrier (TC 2.A.29) family. In terms of assembly, homodimer. Binds to the TIM22 translocation complex during import.

It is found in the mitochondrion inner membrane. Mitochondrial dicarboxylic transporter catalyzing the exchange of dicarboxylic acids like malate and succinate for inorganic phosphate. Required for growth on ethanol and acetate. This chain is Mitochondrial dicarboxylate transporter (DIC1), found in Saccharomyces cerevisiae (strain ATCC 204508 / S288c) (Baker's yeast).